Reading from the N-terminus, the 511-residue chain is 2-isopropylmalate synthase (511 aa).

A compositionally biased stretch (basic and acidic residues) spans 1-16 (MTRKIDIFDTTLRDGE). The segment at 1 to 23 (MTRKIDIFDTTLRDGEQSPGASM) is disordered. The Pyruvate carboxyltransferase domain occupies 5 to 268 (IDIFDTTLRD…HTDVVTQELT (264 aa)). Residues aspartate 14, histidine 203, histidine 205, and asparagine 239 each contribute to the Mn(2+) site. The regulatory domain stretch occupies residues 392 to 511 (ALESVQVVCG…IQTTRSKQGK (120 aa)).

The protein belongs to the alpha-IPM synthase/homocitrate synthase family. LeuA type 1 subfamily. As to quaternary structure, homodimer. Mn(2+) serves as cofactor.

Its subcellular location is the cytoplasm. It carries out the reaction 3-methyl-2-oxobutanoate + acetyl-CoA + H2O = (2S)-2-isopropylmalate + CoA + H(+). The protein operates within amino-acid biosynthesis; L-leucine biosynthesis; L-leucine from 3-methyl-2-oxobutanoate: step 1/4. In terms of biological role, catalyzes the condensation of the acetyl group of acetyl-CoA with 3-methyl-2-oxobutanoate (2-ketoisovalerate) to form 3-carboxy-3-hydroxy-4-methylpentanoate (2-isopropylmalate). This chain is 2-isopropylmalate synthase, found in Olsenella uli (strain ATCC 49627 / DSM 7084 / CCUG 31166 / CIP 109912 / JCM 12494 / LMG 11480 / NCIMB 702895 / VPI D76D-27C) (Lactobacillus uli).